We begin with the raw amino-acid sequence, 132 residues long: S-protein homolog 19 (132 aa).

The N-terminal stretch at 1–26 (MSGSLAFHIIMSVTFMVFFFGGLCEA) is a signal peptide. Asn-87 is a glycosylation site (N-linked (GlcNAc...) asparagine).

This sequence belongs to the plant self-incompatibility (S1) protein family.

The protein resides in the secreted. The chain is S-protein homolog 19 from Arabidopsis thaliana (Mouse-ear cress).